Consider the following 151-residue polypeptide: Protein Turandot Z (151 aa).

The N-terminal stretch at 1–23 (MSRLIHLSFVLALLACLTGTISA) is a signal peptide.

The protein belongs to the Turandot family.

The protein localises to the secreted. Functionally, a humoral factor that may play a role in stress tolerance. This chain is Protein Turandot Z, found in Drosophila persimilis (Fruit fly).